The sequence spans 164 residues: Superoxide dismutase [Cu-Zn] 3 (164 aa).

Cu cation-binding residues include His-51, His-53, and His-68. Residues Cys-62 and Cys-151 are joined by a disulfide bond. Residues His-68, His-76, His-85, and Asp-88 each coordinate Zn(2+). His-125 provides a ligand contact to Cu cation. The Peroxisome localization signal motif lies at 162–164 (AKL).

This sequence belongs to the Cu-Zn superoxide dismutase family. In terms of assembly, homodimer. Requires Cu cation as cofactor. It depends on Zn(2+) as a cofactor. Expressed in leaves (at protein level).

It localises to the peroxisome. The enzyme catalyses 2 superoxide + 2 H(+) = H2O2 + O2. Its function is as follows. Destroys radicals which are normally produced within the cells and which are toxic to biological systems. In Arabidopsis thaliana (Mouse-ear cress), this protein is Superoxide dismutase [Cu-Zn] 3 (CSD3).